Reading from the N-terminus, the 469-residue chain is Glutamate--tRNA ligase (469 aa).

The 'HIGH' region signature appears at P9–G19. The 'KMSKS' region motif lies at K236–R240. Residue K239 participates in ATP binding.

It belongs to the class-I aminoacyl-tRNA synthetase family. Glutamate--tRNA ligase type 1 subfamily. In terms of assembly, monomer.

The protein localises to the cytoplasm. It catalyses the reaction tRNA(Glu) + L-glutamate + ATP = L-glutamyl-tRNA(Glu) + AMP + diphosphate. Functionally, catalyzes the attachment of glutamate to tRNA(Glu) in a two-step reaction: glutamate is first activated by ATP to form Glu-AMP and then transferred to the acceptor end of tRNA(Glu). The protein is Glutamate--tRNA ligase of Pseudoalteromonas atlantica (strain T6c / ATCC BAA-1087).